We begin with the raw amino-acid sequence, 314 residues long: tRNA uridine(34) hydroxylase (314 aa).

Residues 135 to 229 form the Rhodanese domain; the sequence is SDPDTIVIDT…YLEEVPEEES (95 aa). The active-site Cysteine persulfide intermediate is the Cys-189.

This sequence belongs to the TrhO family.

It carries out the reaction uridine(34) in tRNA + AH2 + O2 = 5-hydroxyuridine(34) in tRNA + A + H2O. Catalyzes oxygen-dependent 5-hydroxyuridine (ho5U) modification at position 34 in tRNAs. The protein is tRNA uridine(34) hydroxylase of Agrobacterium fabrum (strain C58 / ATCC 33970) (Agrobacterium tumefaciens (strain C58)).